The sequence spans 974 residues: MAETSIFPIMMLTVMIGVGRGVTDSPGRVSRCGERPAANTSVSYGLLSRIVGGTSAVKGESPWMVSLKRDGKHFCGGTIISDKYVLTAAHCVLEKNFEFQVSVSIGDHDFAVYERSEQRFAIKSVFKHPNFKPSRPFNYDLAILELVESITFDKDIQPACLPSPDDVFPTGTLCMALGWGRLQENGRLPSSLQKVVLPLIEYRRCLSIMETVDRRLAFETVVCAGFPEGGKDACQGDSGGPFLCQRSQGRWVLVGVTSWGLGCARKWADNILDPVESKGSPGVFTDIQRLLNWLSENLNQDKPDFPTYQVQCSTNDGIEKGTTGEILLPTGYKKYYSNNEKCIWTIIVPRGKHILLTFKSFNVECDYSCDLDYLVIYSALGRLIGKFCGDVSPRPLLIADASITLKFISDFHEYKTGFSLFYEAVEPDTYPDSDCGSVAVIFEEGEIQTMNHPHLYSSHANCQWVVHSPANYIIKITFLVFEVEPSEGCIFDRLVVYHDLQGTVVAGFFCGFALPDPVLSVSNVMQITFTSDYSANYLGFRAVISFVLPSSPVKPEKGNNQPRKNQDAMQHFDEGCGVSPLPPRFLYHNLIKAEEAMPNSWPWHVSINFGNKHVCNGAILSKTFVVTSANCVADREEFPSIGLIVAGLHDLESSINTQKRPVEYVIVHPDYNRLSKDYDVALIHVQRPFQYNSYVQPICLPDGHSRLEPSKLCVVSGWDLNVELSTKLQQLEVPVLMDDVCKKYYDGITDRMFCAGVIAEEDNASCLAQSGAPLVCQSAPGTYAIFGIVSRGVGCNETPKAGVYSSVFLFIPWIMETILSVAGIIDTDSEPHHPLFPPDKPSQQKALLPDSPPSSSSQDIYVTCKDVLSLQSPGEIKLVASGQDGPEGGRCQLIFQAPEGHFILLTFKQLSHEHYSLIIYEGASSNKTFKAQLMEEKIPTIMKSAGAVITLEASSTAQDSALHLWLSYSFHNQN.

An N-terminal signal peptide occupies residues M1–G21. Residues V22–R49 constitute a propeptide, activation peptide. N39 carries an N-linked (GlcNAc...) asparagine glycan. The region spanning I50–N299 is the Peptidase S1 1 domain. Cysteines 75 and 91 form a disulfide. H90 (charge relay system) is an active-site residue. Residues V112 and E117 each contribute to the Ca(2+) site. The Charge relay system role is filled by D140. 11 disulfide bridges follow: C174–C244, C205–C223, C234–C263, C312–C342, C369–C388, C435–C462, C489–C510, C615–C631, C713–C776, C741–C754, and C766–C795. Catalysis depends on S238, which acts as the Charge relay system. CUB domains are found at residues C312–V425 and C435–V547. The Peptidase S1 2 domain occupies L590 to L819. A propeptide spans L590–N974 (activation peptide). The N-linked (GlcNAc...) asparagine glycan is linked to N763. The interval E830 to Q858 is disordered. N926 carries N-linked (GlcNAc...) asparagine glycosylation.

Belongs to the peptidase S1 family. The catalytically inactive 107 kDa form is processed both N- and C-terminally to give rise to the 66 kDa catalytically active form and inactive forms of 82 kDa and 59 kDa. As to expression, expressed specifically in the cells lining the bottom of epithelial folds in the oviductal pars recta.

It localises to the secreted. It catalyses the reaction Preferential cleavage at 371-Gly-Ser-Arg-|-Trp-374 of glycoprotein gp43 in Xenopus laevis coelemic egg envelope to yield gp41.. Its function is as follows. Mediates gamete interaction by affecting the vitelline coat. The sequence is that of Ovochymase-2 (OVCH2) from Bufo japonicus (Japanese common toad).